A 348-amino-acid polypeptide reads, in one-letter code: N-acetyl-gamma-glutamyl-phosphate reductase (348 aa).

Residue Cys-150 is part of the active site.

Belongs to the NAGSA dehydrogenase family. Type 1 subfamily.

It is found in the cytoplasm. It catalyses the reaction N-acetyl-L-glutamate 5-semialdehyde + phosphate + NADP(+) = N-acetyl-L-glutamyl 5-phosphate + NADPH + H(+). Its pathway is amino-acid biosynthesis; L-arginine biosynthesis; N(2)-acetyl-L-ornithine from L-glutamate: step 3/4. In terms of biological role, catalyzes the NADPH-dependent reduction of N-acetyl-5-glutamyl phosphate to yield N-acetyl-L-glutamate 5-semialdehyde. The sequence is that of N-acetyl-gamma-glutamyl-phosphate reductase from Symbiobacterium thermophilum (strain DSM 24528 / JCM 14929 / IAM 14863 / T).